We begin with the raw amino-acid sequence, 409 residues long: 2,3-bisphosphoglycerate-independent phosphoglycerate mutase (409 aa).

Residues 160 to 179 form a disordered region; it reads ITDADPKHEGNKPKTVKPLD.

It belongs to the BPG-independent phosphoglycerate mutase family. A-PGAM subfamily.

It catalyses the reaction (2R)-2-phosphoglycerate = (2R)-3-phosphoglycerate. It participates in carbohydrate degradation; glycolysis; pyruvate from D-glyceraldehyde 3-phosphate: step 3/5. Its function is as follows. Catalyzes the interconversion of 2-phosphoglycerate and 3-phosphoglycerate. The protein is 2,3-bisphosphoglycerate-independent phosphoglycerate mutase of Methanosphaera stadtmanae (strain ATCC 43021 / DSM 3091 / JCM 11832 / MCB-3).